Consider the following 303-residue polypeptide: Movement protein (303 aa).

This sequence belongs to the tobamovirus movement protein family.

The protein localises to the host cytoplasm. It localises to the host cytoskeleton. Its subcellular location is the host cell junction. The protein resides in the host plasmodesma. Its function is as follows. Transports viral genome to neighboring plant cells directly through plasmosdesmata, without any budding. The movement protein allows efficient cell to cell propagation, by bypassing the host cell wall barrier. Forms a ribonucleoprotein complex with viral RNA. Binds microtubules and modulates microtubule stability. Can bind double-stranded DNA. This Cymbidium (ORSV) protein is Movement protein (MP).